The sequence spans 55 residues: Trypsin inhibitor (55 aa).

The Kazal-like domain occupies 1–55 (AHMDCTEFNPLCRCNKMLGDLICAVIGDAKEEHRNMCALCCEHPGGFEYSNGPCE). 4 disulfides stabilise this stretch: Cys5-Cys40, Cys12-Cys41, Cys14-Cys37, and Cys23-Cys54.

The protein resides in the secreted. Its function is as follows. Potent inhibitor of trypsin. This Halocynthia roretzi (Sea squirt) protein is Trypsin inhibitor.